Consider the following 389-residue polypeptide: (2R)-sulfolactate sulfo-lyase subunit beta (389 aa).

The protein belongs to the UxaA family. In terms of assembly, (2R)-sulfolactate sulfo-lyase is composed of a SuyA and a SuyB subunit.

It localises to the cytoplasm. It catalyses the reaction (2R)-3-sulfolactate = sulfite + pyruvate + H(+). Its function is as follows. Together with SuyA, desulfonates sulfolactate to pyruvate and sulfite. The chain is (2R)-sulfolactate sulfo-lyase subunit beta (suyB) from Chromohalobacter salexigens (strain ATCC BAA-138 / DSM 3043 / CIP 106854 / NCIMB 13768 / 1H11).